The following is a 287-amino-acid chain: ADP-dependent (S)-NAD(P)H-hydrate dehydratase (287 aa).

A YjeF C-terminal domain is found at Thr7–Phe283. The (6S)-NADPHX site is built by Ala42 and His159. AMP contacts are provided by residues Lys196–Asp200 and Gly224. Asp225 contributes to the (6S)-NADPHX binding site.

Belongs to the NnrD/CARKD family. Homotetramer. The cofactor is Mg(2+).

The enzyme catalyses (6S)-NADHX + ADP = AMP + phosphate + NADH + H(+). It carries out the reaction (6S)-NADPHX + ADP = AMP + phosphate + NADPH + H(+). Catalyzes the dehydration of the S-form of NAD(P)HX at the expense of ADP, which is converted to AMP. Together with NAD(P)HX epimerase, which catalyzes the epimerization of the S- and R-forms, the enzyme allows the repair of both epimers of NAD(P)HX, a damaged form of NAD(P)H that is a result of enzymatic or heat-dependent hydration. This chain is ADP-dependent (S)-NAD(P)H-hydrate dehydratase, found in Nitrosopumilus maritimus (strain SCM1).